A 998-amino-acid chain; its full sequence is Protein Smaug (998 aa).

The segment covering M1–T37 has biased composition (polar residues). Disordered regions lie at residues M1–S45, T50–P69, and L329–S370. Residues L329–S338 are compositionally biased toward low complexity. A phosphoserine mark is found at S564 and S575. Residues E583–M763 form an interaction with cup region. Residues G600–K654 enclose the SAM domain. 2 disordered regions span residues H773–M892 and N943–K977. Polar residues-rich tracts occupy residues K801 to L822 and H854 to P864. S971 is modified (phosphoserine).

Belongs to the SMAUG family. As to quaternary structure, interacts with oskar (osk). Binds to the 3'-UTR of nos. Interacts with cup, which in turn recruits eIF4-E, leading to an indirect interaction between smg and eIF4-E that prevents mRNA translation.

The protein localises to the cytoplasm. In terms of biological role, translation regulator that binds to the 3'-UTR of specific mRNAs such as nanos (nos) and prevent their translation. Prevents translation of unlocalized nos in the bulk cytoplasm via the recruitment of cup. This chain is Protein Smaug, found in Drosophila sechellia (Fruit fly).